We begin with the raw amino-acid sequence, 344 residues long: N-acetyl-gamma-glutamyl-phosphate reductase (344 aa).

Cys147 is an active-site residue.

This sequence belongs to the NAGSA dehydrogenase family. Type 1 subfamily.

It localises to the cytoplasm. The catalysed reaction is N-acetyl-L-glutamate 5-semialdehyde + phosphate + NADP(+) = N-acetyl-L-glutamyl 5-phosphate + NADPH + H(+). The protein operates within amino-acid biosynthesis; L-arginine biosynthesis; N(2)-acetyl-L-ornithine from L-glutamate: step 3/4. Its function is as follows. Catalyzes the NADPH-dependent reduction of N-acetyl-5-glutamyl phosphate to yield N-acetyl-L-glutamate 5-semialdehyde. The sequence is that of N-acetyl-gamma-glutamyl-phosphate reductase from Bacillus amyloliquefaciens (Bacillus velezensis).